Consider the following 601-residue polypeptide: MSKAAGSTQTLKNRFRSDYCGLLCPEREHGSVRLAGWVHRKRDHGGLIFIDLRDHTGISQLVIQPEQQELFAKAEQLHVESVICIEGVVVLRAPGAINSRLASGEIEVVVSQITVESNAHPLPFPVADEVVTSEELRLKYRFIDLRREKIHENIIFRSRLTAAIRRYLEEQDFIEIQTPILTSSSPEGARDFLVPSRLHPGKFYALPQAPQQFKQLLMVSGFPRYFQIAPCFRDEDARADRSPGEFYQLDMEMAFIEQNDLFTILEGMIEHLTRTMSHKRITQFPFPRISYKEVMNRFGTDKPDLRIPLEISDVTPLFVGSAFKVFANSTVEGSCVKALVVKGRGNESRLFYDKAEKRAKELGSGGLAYIQFREEGPKGPVVKFLSEADLATLKEHLGLETGDVVFFGAGKWESTCKIMGGMRTYFGDLFTLDKDELSFCWIVDFPMYEYNEEAKKIDFSHNPFSMPQGEMEALETMPPLDILAYQYDIVCNGIELSSGAIRNHKPEIMYKAFGIAGYSREEVDARFGHMIEAFKLGAPPHGGIAPGLDRLVMILCDEQNIREVIAFPMNQQAQDLMMGSPSEVTPVQLKELHLKVELPKK.

E187 contributes to the L-aspartate binding site. Residues 211 to 214 (QQFK) are aspartate. Residues R233 and H461 each coordinate L-aspartate. 233 to 235 (RDE) is an ATP binding site. E495 contacts ATP. R502 is an L-aspartate binding site. Residue 547 to 550 (GLDR) coordinates ATP.

It belongs to the class-II aminoacyl-tRNA synthetase family. Type 1 subfamily. Homodimer.

It is found in the cytoplasm. It carries out the reaction tRNA(Asx) + L-aspartate + ATP = L-aspartyl-tRNA(Asx) + AMP + diphosphate. Its function is as follows. Aspartyl-tRNA synthetase with relaxed tRNA specificity since it is able to aspartylate not only its cognate tRNA(Asp) but also tRNA(Asn). Reaction proceeds in two steps: L-aspartate is first activated by ATP to form Asp-AMP and then transferred to the acceptor end of tRNA(Asp/Asn). The sequence is that of Aspartate--tRNA(Asp/Asn) ligase from Pelodictyon phaeoclathratiforme (strain DSM 5477 / BU-1).